The sequence spans 426 residues: Serine--tRNA ligase (426 aa).

Residue 233 to 235 (TAE) participates in L-serine binding. 264–266 (RSE) contacts ATP. L-serine is bound at residue E287. Position 351–354 (351–354 (EISS)) interacts with ATP. S387 contacts L-serine.

This sequence belongs to the class-II aminoacyl-tRNA synthetase family. Type-1 seryl-tRNA synthetase subfamily. Homodimer. The tRNA molecule binds across the dimer.

It localises to the cytoplasm. The enzyme catalyses tRNA(Ser) + L-serine + ATP = L-seryl-tRNA(Ser) + AMP + diphosphate + H(+). It catalyses the reaction tRNA(Sec) + L-serine + ATP = L-seryl-tRNA(Sec) + AMP + diphosphate + H(+). It functions in the pathway aminoacyl-tRNA biosynthesis; selenocysteinyl-tRNA(Sec) biosynthesis; L-seryl-tRNA(Sec) from L-serine and tRNA(Sec): step 1/1. Its function is as follows. Catalyzes the attachment of serine to tRNA(Ser). Is also able to aminoacylate tRNA(Sec) with serine, to form the misacylated tRNA L-seryl-tRNA(Sec), which will be further converted into selenocysteinyl-tRNA(Sec). This chain is Serine--tRNA ligase, found in Pseudomonas putida (strain ATCC 47054 / DSM 6125 / CFBP 8728 / NCIMB 11950 / KT2440).